The following is a 173-amino-acid chain: Crossover junction endodeoxyribonuclease RuvC (173 aa).

Residues Asp-8, Glu-67, and Asp-139 contribute to the active site. Residues Asp-8, Glu-67, and Asp-139 each contribute to the Mg(2+) site.

Belongs to the RuvC family. As to quaternary structure, homodimer which binds Holliday junction (HJ) DNA. The HJ becomes 2-fold symmetrical on binding to RuvC with unstacked arms; it has a different conformation from HJ DNA in complex with RuvA. In the full resolvosome a probable DNA-RuvA(4)-RuvB(12)-RuvC(2) complex forms which resolves the HJ. It depends on Mg(2+) as a cofactor.

The protein resides in the cytoplasm. The enzyme catalyses Endonucleolytic cleavage at a junction such as a reciprocal single-stranded crossover between two homologous DNA duplexes (Holliday junction).. Its function is as follows. The RuvA-RuvB-RuvC complex processes Holliday junction (HJ) DNA during genetic recombination and DNA repair. Endonuclease that resolves HJ intermediates. Cleaves cruciform DNA by making single-stranded nicks across the HJ at symmetrical positions within the homologous arms, yielding a 5'-phosphate and a 3'-hydroxyl group; requires a central core of homology in the junction. The consensus cleavage sequence is 5'-(A/T)TT(C/G)-3'. Cleavage occurs on the 3'-side of the TT dinucleotide at the point of strand exchange. HJ branch migration catalyzed by RuvA-RuvB allows RuvC to scan DNA until it finds its consensus sequence, where it cleaves and resolves the cruciform DNA. This Shewanella putrefaciens (strain CN-32 / ATCC BAA-453) protein is Crossover junction endodeoxyribonuclease RuvC.